The following is a 547-amino-acid chain: Chaperonin GroEL (547 aa).

Residues threonine 30–proline 33, lysine 51, aspartate 87–threonine 91, glycine 415, and aspartate 496 contribute to the ATP site. Positions lysine 527–phenylalanine 547 are disordered. A compositionally biased stretch (gly residues) spans proline 534–phenylalanine 547.

The protein belongs to the chaperonin (HSP60) family. Forms a cylinder of 14 subunits composed of two heptameric rings stacked back-to-back. Interacts with the co-chaperonin GroES.

The protein resides in the cytoplasm. The enzyme catalyses ATP + H2O + a folded polypeptide = ADP + phosphate + an unfolded polypeptide.. Functionally, together with its co-chaperonin GroES, plays an essential role in assisting protein folding. The GroEL-GroES system forms a nano-cage that allows encapsulation of the non-native substrate proteins and provides a physical environment optimized to promote and accelerate protein folding. The sequence is that of Chaperonin GroEL from Methylocella silvestris (strain DSM 15510 / CIP 108128 / LMG 27833 / NCIMB 13906 / BL2).